Reading from the N-terminus, the 288-residue chain is Diaminopimelate epimerase (288 aa).

Substrate is bound by residues N13, Q46, and N66. Catalysis depends on C75, which acts as the Proton donor. Substrate contacts are provided by residues 76-77 (GN), N166, N199, and 217-218 (ER). Catalysis depends on C226, which acts as the Proton acceptor. Substrate is bound at residue 227 to 228 (GT).

The protein belongs to the diaminopimelate epimerase family. In terms of assembly, homodimer.

The protein localises to the cytoplasm. The enzyme catalyses (2S,6S)-2,6-diaminopimelate = meso-2,6-diaminopimelate. The protein operates within amino-acid biosynthesis; L-lysine biosynthesis via DAP pathway; DL-2,6-diaminopimelate from LL-2,6-diaminopimelate: step 1/1. Catalyzes the stereoinversion of LL-2,6-diaminopimelate (L,L-DAP) to meso-diaminopimelate (meso-DAP), a precursor of L-lysine and an essential component of the bacterial peptidoglycan. This Cupriavidus necator (strain ATCC 17699 / DSM 428 / KCTC 22496 / NCIMB 10442 / H16 / Stanier 337) (Ralstonia eutropha) protein is Diaminopimelate epimerase.